The sequence spans 1454 residues: Probable cleavage and polyadenylation specificity factor subunit 1 (1454 aa).

The tract at residues 736–765 is disordered; it reads KQSNTRKRKRLGHDAIQSSRGGEQSDAIDP.

It belongs to the CPSF1 family. As to quaternary structure, CPSF is a heterotetramer composed of four distinct subunits 160 (cpsf-1), 100 (cpsf-2), 70 (cpsf-3), and 30 kDa (cpsf-4).

Its subcellular location is the nucleus. CPSF plays a key role in pre-mRNA 3'-end formation, recognizing the AAUAAA signal sequence and interacting with poly(A)polymerase and other factors to bring about cleavage and poly(A) addition. This subunit is involved in the RNA recognition step of the polyadenylation reaction. In Caenorhabditis elegans, this protein is Probable cleavage and polyadenylation specificity factor subunit 1 (cpsf-1).